The sequence spans 447 residues: N-succinylarginine dihydrolase (447 aa).

Residues 19 to 28 (GGLAVGNIAS), asparagine 110, and 137 to 138 (HR) each bind substrate. Glutamate 174 is a catalytic residue. Substrate is bound at residue arginine 213. Residue histidine 249 is part of the active site. Residues aspartate 251 and asparagine 362 each coordinate substrate. Cysteine 368 (nucleophile) is an active-site residue.

The protein belongs to the succinylarginine dihydrolase family. As to quaternary structure, homodimer.

It catalyses the reaction N(2)-succinyl-L-arginine + 2 H2O + 2 H(+) = N(2)-succinyl-L-ornithine + 2 NH4(+) + CO2. Its pathway is amino-acid degradation; L-arginine degradation via AST pathway; L-glutamate and succinate from L-arginine: step 2/5. Functionally, catalyzes the hydrolysis of N(2)-succinylarginine into N(2)-succinylornithine, ammonia and CO(2). The polypeptide is N-succinylarginine dihydrolase (Nitrosospira multiformis (strain ATCC 25196 / NCIMB 11849 / C 71)).